A 367-amino-acid chain; its full sequence is Peptide chain release factor 2 (367 aa).

Residue Q254 is modified to N5-methylglutamine.

It belongs to the prokaryotic/mitochondrial release factor family. Methylated by PrmC. Methylation increases the termination efficiency of RF2.

The protein localises to the cytoplasm. In terms of biological role, peptide chain release factor 2 directs the termination of translation in response to the peptide chain termination codons UGA and UAA. This chain is Peptide chain release factor 2, found in Neisseria meningitidis serogroup C / serotype 2a (strain ATCC 700532 / DSM 15464 / FAM18).